The primary structure comprises 614 residues: RNA polymerase sigma factor RpoD (614 aa).

The disordered stretch occupies residues 168-245 (DPDDNIAAPT…PEEKRSYPQG (78 aa)). Over residues 193-209 (EADDDEEESEGGDDEEE) the composition is skewed to acidic residues. Residues 215 to 232 (TRSSQPSVSVRYPSSFSD) show a composition bias toward polar residues. Residues 380-450 (MVEANLRLVI…TRSIADQART (71 aa)) form a sigma-70 factor domain-2 region. The Interaction with polymerase core subunit RpoC motif lies at 404 to 407 (DLIQ). The segment at 459–535 (ETINKLNRIS…DSTMQSPIYV (77 aa)) is sigma-70 factor domain-3. The sigma-70 factor domain-4 stretch occupies residues 548 to 601 (VLSGLTAREAKVLRMRFGIDMNTDHTLEEVGKQFDVTRERIRQIEAKAWRKLRH). Residues 574–593 (LEEVGKQFDVTRERIRQIEA) constitute a DNA-binding region (H-T-H motif).

This sequence belongs to the sigma-70 factor family. RpoD/SigA subfamily. Interacts transiently with the RNA polymerase catalytic core.

The protein localises to the cytoplasm. In terms of biological role, sigma factors are initiation factors that promote the attachment of RNA polymerase to specific initiation sites and are then released. This sigma factor is the primary sigma factor during exponential growth. The protein is RNA polymerase sigma factor RpoD of Pseudomonas putida (Arthrobacter siderocapsulatus).